The sequence spans 417 residues: NADH-quinone oxidoreductase subunit D (417 aa).

The protein belongs to the complex I 49 kDa subunit family. NDH-1 is composed of 14 different subunits. Subunits NuoB, C, D, E, F, and G constitute the peripheral sector of the complex.

It localises to the cell inner membrane. The catalysed reaction is a quinone + NADH + 5 H(+)(in) = a quinol + NAD(+) + 4 H(+)(out). Functionally, NDH-1 shuttles electrons from NADH, via FMN and iron-sulfur (Fe-S) centers, to quinones in the respiratory chain. The immediate electron acceptor for the enzyme in this species is believed to be ubiquinone. Couples the redox reaction to proton translocation (for every two electrons transferred, four hydrogen ions are translocated across the cytoplasmic membrane), and thus conserves the redox energy in a proton gradient. The protein is NADH-quinone oxidoreductase subunit D of Azoarcus sp. (strain BH72).